The sequence spans 62 residues: Delta-theraphotoxin-Cg1a 3 (62 aa).

A signal peptide spans 1-21; the sequence is MKTSILFVIFSLALVFALSPA. Residues 22-29 constitute a propeptide that is removed on maturation; that stretch reads TEIEETDR. 3 cysteine pairs are disulfide-bonded: C31/C46, C38/C51, and C45/C58.

The protein belongs to the neurotoxin 10 (Hwtx-1) family. 33 (Jztx-1) subfamily. In terms of tissue distribution, expressed by the venom gland.

Its subcellular location is the secreted. Its function is as follows. Moderately inhibits voltage-gated sodium channels and weakly inhibits voltage-gated potassium channel. Inhibits the inactivation of rat Nav1.2/SCN2A (IC(50)=870 nM), rat Nav1.3/SCN3A (IC(50)=845 nM), rat Nav1.4/SCN4A (IC(50)=339 nM), human Nav1.5/SCN5A (IC(50)=335 nM) and human Nav1.7/SCN9A sodium channels (IC(50)=348 nM). The toxin delays the inactivation of sodium channels without affecting the activation and steady-state inactivation kinetics in the physiological range of voltages. Site-directed mutagenesis of the sodium channel indicates that the toxin interacts with site 3 located at the extracellular S3-S4 linker of domain IV. On potassium channels, it inhibits activation of channels with an IC(50) of 8.05 uM through a voltage sensor-trapping mechanism. It increases muscle contraction in several assays (mouse phrenic nerve-diaphragm, toad heart, rat vas deferens) and is suggested to act both presynaptically and postsynaptically. This Chilobrachys guangxiensis (Chinese earth tiger tarantula) protein is Delta-theraphotoxin-Cg1a 3.